A 315-amino-acid polypeptide reads, in one-letter code: Acetaldehyde dehydrogenase (315 aa).

13–16 (SGNI) lines the NAD(+) pocket. Cys143 serves as the catalytic Acyl-thioester intermediate. NAD(+) is bound by residues 174–182 (SAGPGTRKN) and Asn285.

The protein belongs to the acetaldehyde dehydrogenase family.

It catalyses the reaction acetaldehyde + NAD(+) + CoA = acetyl-CoA + NADH + H(+). The sequence is that of Acetaldehyde dehydrogenase from Shewanella woodyi (strain ATCC 51908 / MS32).